We begin with the raw amino-acid sequence, 403 residues long: Argininosuccinate synthase (403 aa).

10 to 18 is an ATP binding site; that stretch reads AYSGGLDTS. Tyrosine 87 provides a ligand contact to L-citrulline. Position 117 (glycine 117) interacts with ATP. 3 residues coordinate L-aspartate: threonine 119, asparagine 123, and aspartate 124. Asparagine 123 is a binding site for L-citrulline. Positions 127, 175, 260, and 272 each coordinate L-citrulline.

Belongs to the argininosuccinate synthase family. Type 1 subfamily. In terms of assembly, homotetramer.

The protein localises to the cytoplasm. The enzyme catalyses L-citrulline + L-aspartate + ATP = 2-(N(omega)-L-arginino)succinate + AMP + diphosphate + H(+). It functions in the pathway amino-acid biosynthesis; L-arginine biosynthesis; L-arginine from L-ornithine and carbamoyl phosphate: step 2/3. This Bacillus subtilis (strain 168) protein is Argininosuccinate synthase.